The following is a 196-amino-acid chain: Imidazoleglycerol-phosphate dehydratase (196 aa).

The protein belongs to the imidazoleglycerol-phosphate dehydratase family.

It localises to the cytoplasm. It catalyses the reaction D-erythro-1-(imidazol-4-yl)glycerol 3-phosphate = 3-(imidazol-4-yl)-2-oxopropyl phosphate + H2O. The protein operates within amino-acid biosynthesis; L-histidine biosynthesis; L-histidine from 5-phospho-alpha-D-ribose 1-diphosphate: step 6/9. In Acidiphilium cryptum (strain JF-5), this protein is Imidazoleglycerol-phosphate dehydratase.